The chain runs to 359 residues: 3-dehydroquinate synthase (359 aa).

NAD(+)-binding positions include 71–76 (DGEQFK), 105–109 (GVIGD), 129–130 (TT), Lys142, Lys151, and 169–172 (CLQT). Positions 184, 247, and 264 each coordinate Zn(2+).

It belongs to the sugar phosphate cyclases superfamily. Dehydroquinate synthase family. Requires Co(2+) as cofactor. Zn(2+) is required as a cofactor. It depends on NAD(+) as a cofactor.

The protein resides in the cytoplasm. The enzyme catalyses 7-phospho-2-dehydro-3-deoxy-D-arabino-heptonate = 3-dehydroquinate + phosphate. It participates in metabolic intermediate biosynthesis; chorismate biosynthesis; chorismate from D-erythrose 4-phosphate and phosphoenolpyruvate: step 2/7. Catalyzes the conversion of 3-deoxy-D-arabino-heptulosonate 7-phosphate (DAHP) to dehydroquinate (DHQ). The chain is 3-dehydroquinate synthase from Shewanella sp. (strain ANA-3).